The sequence spans 172 residues: 16S rRNA aminocarboxypropyltransferase (172 aa).

Threonine 21, leucine 71, leucine 93, and threonine 112 together coordinate S-adenosyl-L-methionine.

The protein belongs to the TDD superfamily. TSR3 family.

The protein localises to the cytoplasm. It catalyses the reaction an N(1)-methylpseudouridine in rRNA + S-adenosyl-L-methionine = N(1)-methyl-N(3)-[(3S)-3-amino-3-carboxypropyl]pseudouridine in rRNA + S-methyl-5'-thioadenosine + H(+). Aminocarboxypropyltransferase that catalyzes the aminocarboxypropyl transfer on pseudouridine at position 914 in 16S rRNA. It constitutes the last step in biosynthesis of the hypermodified N1-methyl-N3-(3-amino-3-carboxypropyl) pseudouridine (m1acp3-Psi). The polypeptide is 16S rRNA aminocarboxypropyltransferase (Methanocaldococcus jannaschii (strain ATCC 43067 / DSM 2661 / JAL-1 / JCM 10045 / NBRC 100440) (Methanococcus jannaschii)).